Consider the following 271-residue polypeptide: Shikimate dehydrogenase (NADP(+)) (271 aa).

Shikimate contacts are provided by residues 19-21 (SLS) and threonine 65. Residue lysine 69 is the Proton acceptor of the active site. Glutamate 81 is a binding site for NADP(+). The shikimate site is built by asparagine 90 and aspartate 105. NADP(+) is bound by residues 128 to 132 (GAGGA), 150 to 155 (NRTIEK), and isoleucine 211. Shikimate is bound at residue tyrosine 213. Glycine 234 contributes to the NADP(+) binding site.

This sequence belongs to the shikimate dehydrogenase family. In terms of assembly, homodimer.

The catalysed reaction is shikimate + NADP(+) = 3-dehydroshikimate + NADPH + H(+). It functions in the pathway metabolic intermediate biosynthesis; chorismate biosynthesis; chorismate from D-erythrose 4-phosphate and phosphoenolpyruvate: step 4/7. In terms of biological role, involved in the biosynthesis of the chorismate, which leads to the biosynthesis of aromatic amino acids. Catalyzes the reversible NADPH linked reduction of 3-dehydroshikimate (DHSA) to yield shikimate (SA). The chain is Shikimate dehydrogenase (NADP(+)) from Pyrococcus furiosus (strain ATCC 43587 / DSM 3638 / JCM 8422 / Vc1).